A 209-amino-acid chain; its full sequence is A-type ATP synthase subunit D (209 aa).

This sequence belongs to the V-ATPase D subunit family. Has multiple subunits, A(3), B(3), C, D, E, F, G, I and K(x); there may be a few other subunits as well.

It localises to the cell membrane. In terms of biological role, component of the A-type ATP synthase that produces ATP from ADP in the presence of a proton gradient across the membrane. The protein is A-type ATP synthase subunit D of Methanosarcina mazei (strain ATCC BAA-159 / DSM 3647 / Goe1 / Go1 / JCM 11833 / OCM 88) (Methanosarcina frisia).